We begin with the raw amino-acid sequence, 334 residues long: Aspartate carbamoyltransferase catalytic subunit (334 aa).

Positions 70 and 71 each coordinate carbamoyl phosphate. Residue Lys98 participates in L-aspartate binding. Carbamoyl phosphate contacts are provided by Arg120, His150, and Gln153. The L-aspartate site is built by Arg183 and Arg239. 2 residues coordinate carbamoyl phosphate: Gly280 and Pro281.

Belongs to the aspartate/ornithine carbamoyltransferase superfamily. ATCase family. In terms of assembly, heterododecamer (2C3:3R2) of six catalytic PyrB chains organized as two trimers (C3), and six regulatory PyrI chains organized as three dimers (R2).

The catalysed reaction is carbamoyl phosphate + L-aspartate = N-carbamoyl-L-aspartate + phosphate + H(+). It participates in pyrimidine metabolism; UMP biosynthesis via de novo pathway; (S)-dihydroorotate from bicarbonate: step 2/3. Its function is as follows. Catalyzes the condensation of carbamoyl phosphate and aspartate to form carbamoyl aspartate and inorganic phosphate, the committed step in the de novo pyrimidine nucleotide biosynthesis pathway. The polypeptide is Aspartate carbamoyltransferase catalytic subunit (Pseudomonas paraeruginosa (strain DSM 24068 / PA7) (Pseudomonas aeruginosa (strain PA7))).